Here is a 61-residue protein sequence, read N- to C-terminus: Photosystem II reaction center protein K (61 aa).

A propeptide spanning residues 1–24 (MLNIFNLICICFNSALFSSSFLFA) is cleaved from the precursor. A helical transmembrane segment spans residues 36–56 (IVDFMPVIPVLFFLLAFVWQA).

This sequence belongs to the PsbK family. In terms of assembly, PSII is composed of 1 copy each of membrane proteins PsbA, PsbB, PsbC, PsbD, PsbE, PsbF, PsbH, PsbI, PsbJ, PsbK, PsbL, PsbM, PsbT, PsbX, PsbY, PsbZ, Psb30/Ycf12, at least 3 peripheral proteins of the oxygen-evolving complex and a large number of cofactors. It forms dimeric complexes.

It localises to the plastid. The protein localises to the chloroplast thylakoid membrane. In terms of biological role, one of the components of the core complex of photosystem II (PSII). PSII is a light-driven water:plastoquinone oxidoreductase that uses light energy to abstract electrons from H(2)O, generating O(2) and a proton gradient subsequently used for ATP formation. It consists of a core antenna complex that captures photons, and an electron transfer chain that converts photonic excitation into a charge separation. The protein is Photosystem II reaction center protein K of Gossypium barbadense (Sea Island cotton).